A 472-amino-acid chain; its full sequence is Siroheme synthase 1 (472 aa).

The interval 1–203 (MDYLPLFADL…GQLTEAENEL (203 aa)) is precorrin-2 dehydrogenase /sirohydrochlorin ferrochelatase. NAD(+)-binding positions include 22–23 (EV) and 43–44 (QT). Ser-128 is subject to Phosphoserine. Residues 215–472 (GEVALVGAGP…AISPSVVNLA (258 aa)) are uroporphyrinogen-III C-methyltransferase. Residue Pro-224 coordinates S-adenosyl-L-methionine. The Proton acceptor role is filled by Asp-247. The active-site Proton donor is the Lys-269. S-adenosyl-L-methionine is bound by residues 300-302 (GGD), Ile-305, 330-331 (TA), Met-382, and Gly-411.

This sequence in the N-terminal section; belongs to the precorrin-2 dehydrogenase / sirohydrochlorin ferrochelatase family. It in the C-terminal section; belongs to the precorrin methyltransferase family.

It catalyses the reaction uroporphyrinogen III + 2 S-adenosyl-L-methionine = precorrin-2 + 2 S-adenosyl-L-homocysteine + H(+). The catalysed reaction is precorrin-2 + NAD(+) = sirohydrochlorin + NADH + 2 H(+). The enzyme catalyses siroheme + 2 H(+) = sirohydrochlorin + Fe(2+). It functions in the pathway cofactor biosynthesis; adenosylcobalamin biosynthesis; precorrin-2 from uroporphyrinogen III: step 1/1. Its pathway is cofactor biosynthesis; adenosylcobalamin biosynthesis; sirohydrochlorin from precorrin-2: step 1/1. It participates in porphyrin-containing compound metabolism; siroheme biosynthesis; precorrin-2 from uroporphyrinogen III: step 1/1. The protein operates within porphyrin-containing compound metabolism; siroheme biosynthesis; siroheme from sirohydrochlorin: step 1/1. It functions in the pathway porphyrin-containing compound metabolism; siroheme biosynthesis; sirohydrochlorin from precorrin-2: step 1/1. Multifunctional enzyme that catalyzes the SAM-dependent methylations of uroporphyrinogen III at position C-2 and C-7 to form precorrin-2 via precorrin-1. Then it catalyzes the NAD-dependent ring dehydrogenation of precorrin-2 to yield sirohydrochlorin. Finally, it catalyzes the ferrochelation of sirohydrochlorin to yield siroheme. The polypeptide is Siroheme synthase 1 (Yersinia pseudotuberculosis serotype I (strain IP32953)).